A 162-amino-acid chain; its full sequence is NADH-quinone oxidoreductase subunit I (162 aa).

4Fe-4S ferredoxin-type domains follow at residues 53-83 (LRRY…IESE) and 93-122 (TRYD…ETRV). The [4Fe-4S] cluster site is built by cysteine 63, cysteine 66, cysteine 69, cysteine 73, cysteine 102, cysteine 105, cysteine 108, and cysteine 112.

It belongs to the complex I 23 kDa subunit family. In terms of assembly, NDH-1 is composed of 14 different subunits. Subunits NuoA, H, J, K, L, M, N constitute the membrane sector of the complex. [4Fe-4S] cluster is required as a cofactor.

It localises to the cell inner membrane. It catalyses the reaction a quinone + NADH + 5 H(+)(in) = a quinol + NAD(+) + 4 H(+)(out). Its function is as follows. NDH-1 shuttles electrons from NADH, via FMN and iron-sulfur (Fe-S) centers, to quinones in the respiratory chain. The immediate electron acceptor for the enzyme in this species is believed to be ubiquinone. Couples the redox reaction to proton translocation (for every two electrons transferred, four hydrogen ions are translocated across the cytoplasmic membrane), and thus conserves the redox energy in a proton gradient. This is NADH-quinone oxidoreductase subunit I from Nitrosomonas eutropha (strain DSM 101675 / C91 / Nm57).